A 545-amino-acid chain; its full sequence is Light-independent protochlorophyllide reductase subunit N (545 aa).

[4Fe-4S] cluster is bound by residues cysteine 102, cysteine 127, and cysteine 187.

It belongs to the BchN/ChlN family. Protochlorophyllide reductase is composed of three subunits; ChlL, ChlN and ChlB. Forms a heterotetramer of two ChlB and two ChlN subunits. The cofactor is [4Fe-4S] cluster.

The protein localises to the plastid. It localises to the chloroplast. It carries out the reaction chlorophyllide a + oxidized 2[4Fe-4S]-[ferredoxin] + 2 ADP + 2 phosphate = protochlorophyllide a + reduced 2[4Fe-4S]-[ferredoxin] + 2 ATP + 2 H2O. The protein operates within porphyrin-containing compound metabolism; chlorophyll biosynthesis (light-independent). Functionally, component of the dark-operative protochlorophyllide reductase (DPOR) that uses Mg-ATP and reduced ferredoxin to reduce ring D of protochlorophyllide (Pchlide) to form chlorophyllide a (Chlide). This reaction is light-independent. The NB-protein (ChlN-ChlB) is the catalytic component of the complex. This chain is Light-independent protochlorophyllide reductase subunit N, found in Chlamydomonas reinhardtii (Chlamydomonas smithii).